The primary structure comprises 457 residues: Glutamate--tRNA ligase 2 (457 aa).

Residues 8–18 (PSPTGYIHIGN) carry the 'HIGH' region motif. The short motif at 249–253 (GFSKR) is the 'KMSKS' region element. Lys-252 lines the ATP pocket.

The protein belongs to the class-I aminoacyl-tRNA synthetase family. Glutamate--tRNA ligase type 1 subfamily. Monomer.

It localises to the cytoplasm. It carries out the reaction tRNA(Glu) + L-glutamate + ATP = L-glutamyl-tRNA(Glu) + AMP + diphosphate. Catalyzes the attachment of glutamate to tRNA(Glu) in a two-step reaction: glutamate is first activated by ATP to form Glu-AMP and then transferred to the acceptor end of tRNA(Glu). The sequence is that of Glutamate--tRNA ligase 2 from Bartonella tribocorum (strain CIP 105476 / IBS 506).